Here is a 275-residue protein sequence, read N- to C-terminus: Polyamine aminopropyltransferase (275 aa).

The region spanning 2–235 (HLWFTEKQND…AMWSFTIGSK (234 aa)) is the PABS domain. S-methyl-5'-thioadenosine is bound at residue Gln31. 2 residues coordinate spermidine: His62 and Asp86. Residues Glu106 and 137–138 (DG) contribute to the S-methyl-5'-thioadenosine site. Catalysis depends on Asp155, which acts as the Proton acceptor. Residue 155–158 (DSTD) coordinates spermidine. Residue Pro162 participates in S-methyl-5'-thioadenosine binding.

Belongs to the spermidine/spermine synthase family. In terms of assembly, homodimer or homotetramer.

The protein resides in the cytoplasm. It catalyses the reaction S-adenosyl 3-(methylsulfanyl)propylamine + putrescine = S-methyl-5'-thioadenosine + spermidine + H(+). It participates in amine and polyamine biosynthesis; spermidine biosynthesis; spermidine from putrescine: step 1/1. In terms of biological role, catalyzes the irreversible transfer of a propylamine group from the amino donor S-adenosylmethioninamine (decarboxy-AdoMet) to putrescine (1,4-diaminobutane) to yield spermidine. The chain is Polyamine aminopropyltransferase from Desulforudis audaxviator (strain MP104C).